The sequence spans 1732 residues: Serine/threonine-protein kinase MRCK alpha (1732 aa).

The Protein kinase domain occupies 77–343 (FEILKVIGRG…IEDFKKHPFF (267 aa)). Residues 83–91 (IGRGAFGEV) and Lys106 each bind ATP. Residue Asp201 is the Proton acceptor of the active site. A phosphoserine; by autocatalysis mark is found at Ser222 and Ser234. Thr240 carries the phosphothreonine; by autocatalysis modification. One can recognise an AGC-kinase C-terminal domain in the interval 344–414 (SGIDWDNIRN…TSSCVLSDRS (71 aa)). Coiled-coil stretches lie at residues 437 to 820 (NNLA…WEAQ) and 880 to 943 (LELQ…SEKG). Positions 968–1003 (ERSPSCTPASKGRRTVDSTPLSVHTPTLRKKGCPGS) are disordered. The Phorbol-ester/DAG-type zinc finger occupies 1012 to 1062 (THQFFVKSFTTPTKCHQCTSLMVGLIRQGCSCEVCGFSCHITCVNKAPTTC). Residues 1082 to 1201 (GTAYEGHVRI…WVGVLSELHK (120 aa)) enclose the PH domain. At Ser1127 the chain carries Phosphoserine. The CNH domain maps to 1227 to 1499 (IKTTQAAAII…RPLNNEGSLN (273 aa)). Residue Ser1545 is modified to Phosphoserine. One can recognise a CRIB domain in the interval 1571–1584 (ISNPTNFNHIAHMG). The tract at residues 1591-1732 (ILKDLPMNPR…ESTDRGSWDP (142 aa)) is disordered. Polar residues predominate over residues 1604-1619 (SRTVFSGSVSIPSITK). Phosphoserine occurs at positions 1611, 1613, 1629, 1651, 1664, 1669, and 1693. Residues 1625–1640 (GRSMSASSGLSARSSA) show a composition bias toward low complexity. Residues 1665–1674 (PSEGSLSSGG) show a composition bias toward low complexity. Residues 1697-1707 (STASNSSNLSS) are compositionally biased toward low complexity. Ser1719 and Ser1721 each carry phosphoserine.

It belongs to the protein kinase superfamily. AGC Ser/Thr protein kinase family. DMPK subfamily. In terms of assembly, homodimer and homotetramer via the coiled coil regions. Interacts tightly with GTP-bound but not GDP-bound CDC42. Forms a tripartite complex with MYO18A and LURAP1 with the latter acting as an adapter connecting CDC42BPA and MYO18A. LURAP1 binding results in activation of CDC42BPA by abolition of its negative autoregulation. Interacts with LURAP1. Interacts (via AGC-kinase C-terminal domain) with FAM89B/LRAP25 (via LRR repeat). Forms a tripartite complex with FAM89B/LRAP25 and LIMK1. The cofactor is Mg(2+). Proteolytically cleaved by caspases upon apoptosis induction. The cleavage at Asp-478 by CASP3 increases its kinase activity (in vitro). As to expression, abundant in the heart, brain, skeletal muscle, kidney, and pancreas, with little or no expression in the lung and liver.

The protein localises to the cytoplasm. It is found in the cell projection. The protein resides in the lamellipodium. It carries out the reaction L-seryl-[protein] + ATP = O-phospho-L-seryl-[protein] + ADP + H(+). The enzyme catalyses L-threonyl-[protein] + ATP = O-phospho-L-threonyl-[protein] + ADP + H(+). Its activity is regulated as follows. Maintained in an inactive, closed conformation by an interaction between the kinase domain and the negative autoregulatory C-terminal coiled-coil region. Agonist binding to the phorbol ester binding site disrupts this, releasing the kinase domain to allow N-terminus-mediated dimerization and kinase activation by transautophosphorylation. Inhibited by chelerythrine chloride. In terms of biological role, serine/threonine-protein kinase which is an important downstream effector of CDC42 and plays a role in the regulation of cytoskeleton reorganization and cell migration. Regulates actin cytoskeletal reorganization via phosphorylation of PPP1R12C and MYL9/MLC2. In concert with MYO18A and LURAP1, is involved in modulating lamellar actomyosin retrograde flow that is crucial to cell protrusion and migration. Phosphorylates: PPP1R12A, LIMK1 and LIMK2. May play a role in TFRC-mediated iron uptake. In concert with FAM89B/LRAP25 mediates the targeting of LIMK1 to the lamellipodium resulting in its activation and subsequent phosphorylation of CFL1 which is important for lamellipodial F-actin regulation. Triggers the formation of an extrusion apical actin ring required for epithelial extrusion of apoptotic cells. The polypeptide is Serine/threonine-protein kinase MRCK alpha (Homo sapiens (Human)).